A 366-amino-acid polypeptide reads, in one-letter code: Protein-methionine-sulfoxide reductase catalytic subunit MsrP (366 aa).

Residues 1–22 (MHNTFTHTKNNTHTKNNTQAKN) show a composition bias toward low complexity. Residues 1 to 40 (MHNTFTHTKNNTHTKNNTQAKNSGSQTKSNAVSLNKPRKL) form a disordered region. A signal peptide (tat-type signal) is located at residues 1 to 76 (MHNTFTHTKN…TLALPASAQA (76 aa)). The segment covering 23–33 (SGSQTKSNAVS) has biased composition (polar residues). Mo-molybdopterin-binding positions include N120, 123–124 (YE), C178, T213, N265, R270, and 281–283 (SIK).

The protein belongs to the MsrP family. Heterodimer of a catalytic subunit (MsrP) and a heme-binding subunit (MsrQ). Mo-molybdopterin is required as a cofactor. Predicted to be exported by the Tat system. The position of the signal peptide cleavage has not been experimentally proven.

It is found in the periplasm. The enzyme catalyses L-methionyl-[protein] + a quinone + H2O = L-methionyl-(S)-S-oxide-[protein] + a quinol. It catalyses the reaction L-methionyl-[protein] + a quinone + H2O = L-methionyl-(R)-S-oxide-[protein] + a quinol. Functionally, part of the MsrPQ system that repairs oxidized periplasmic proteins containing methionine sulfoxide residues (Met-O), using respiratory chain electrons. Thus protects these proteins from oxidative-stress damage caused by reactive species of oxygen and chlorine generated by the host defense mechanisms. MsrPQ is essential for the maintenance of envelope integrity under bleach stress, rescuing a wide series of structurally unrelated periplasmic proteins from methionine oxidation. The catalytic subunit MsrP is non-stereospecific, being able to reduce both (R-) and (S-) diastereoisomers of methionine sulfoxide. The polypeptide is Protein-methionine-sulfoxide reductase catalytic subunit MsrP (Yersinia pestis).